The primary structure comprises 101 residues: Small ribosomal subunit protein uS14 (101 aa).

It belongs to the universal ribosomal protein uS14 family. In terms of assembly, part of the 30S ribosomal subunit. Contacts proteins S3 and S10.

In terms of biological role, binds 16S rRNA, required for the assembly of 30S particles and may also be responsible for determining the conformation of the 16S rRNA at the A site. In Leifsonia xyli subsp. xyli (strain CTCB07), this protein is Small ribosomal subunit protein uS14.